Consider the following 571-residue polypeptide: Apolipoprotein N-acyltransferase (571 aa).

The next 6 membrane-spanning stretches (helical) occupy residues Val-13 to Val-33, Leu-51 to Tyr-68, Leu-72 to Ile-92, Leu-118 to Ile-138, Met-152 to Val-172, and Leu-199 to Ala-219. The CN hydrolase domain occupies Asn-234 to Arg-527. Glu-275 acts as the Proton acceptor in catalysis. Residue Lys-380 is part of the active site. Cys-430 functions as the Nucleophile in the catalytic mechanism. Residues Ala-542–Met-562 form a helical membrane-spanning segment.

It belongs to the CN hydrolase family. Apolipoprotein N-acyltransferase subfamily.

It is found in the cell inner membrane. The enzyme catalyses N-terminal S-1,2-diacyl-sn-glyceryl-L-cysteinyl-[lipoprotein] + a glycerophospholipid = N-acyl-S-1,2-diacyl-sn-glyceryl-L-cysteinyl-[lipoprotein] + a 2-acyl-sn-glycero-3-phospholipid + H(+). It participates in protein modification; lipoprotein biosynthesis (N-acyl transfer). Functionally, catalyzes the phospholipid dependent N-acylation of the N-terminal cysteine of apolipoprotein, the last step in lipoprotein maturation. This Rhodopirellula baltica (strain DSM 10527 / NCIMB 13988 / SH1) protein is Apolipoprotein N-acyltransferase.